Consider the following 243-residue polypeptide: Sugar fermentation stimulation protein homolog (243 aa).

It belongs to the SfsA family.

This chain is Sugar fermentation stimulation protein homolog, found in Lacticaseibacillus casei (strain BL23) (Lactobacillus casei).